The following is a 146-amino-acid chain: Hemoglobin subunit beta (146 aa).

The region spanning 2 to 146 is the Globin domain; sequence PFSAHEEKLI…VAAALSVEYY (145 aa). Heme b is bound by residues histidine 63 and histidine 92.

This sequence belongs to the globin family. In terms of assembly, heterotetramer of two alpha chains and two beta chains. When oxygenated in vitro, exists virtually only in polymeric form. When deoxygenated, forms tetramers, octamers and larger polymers. As to expression, red blood cells.

In terms of biological role, involved in oxygen transport from the lung to the various peripheral tissues. The sequence is that of Hemoglobin subunit beta from Paleosuchus palpebrosus (Cuvier's smooth-fronted caiman).